Consider the following 376-residue polypeptide: MLTAVCGSLGSQHTDAPHASPPRLDLQPLQTYQGHTSPEAGDYPSPLQPGELQSLPLGPEVDFSQGYELPGASSRVTCEDLESDSPLAPGPFSKLLQPDMSHHYESWFRPTHPGTEDGSWWDLHPGTSWMDLPHTQGALTSPGHPGALQPALGGYVGDHQLCAPPPHPHPHHLLPAAGGQHLLGPPDGAKALEAAAQESQGLDSSLDAASRPKGSRRSVPRSSGQTVCRCPNCLEAERLGAPCGPDGGKKKHLHNCHIPGCGKAYAKTSHLKAHLRWHSGDRPFVCNWLFCGKRFTRSDELQRHLQTHTGTKKFPCAVCSRVFMRSDHLAKHMKTHEGAKEEAAAAAQGEGKAGGVVEPPGGKGKREAEGSSASSN.

A disordered region spans residues 1-70; the sequence is MLTAVCGSLG…VDFSQGYELP (70 aa). The 9aaTAD motif lies at 118-126; that stretch reads GSWWDLHPG. Positions 164 to 224 are disordered; it reads PPPHPHPHHL…SRRSVPRSSG (61 aa). 3 C2H2-type zinc fingers span residues 254-278, 284-308, and 314-336; these read HNCH…LRWH, FVCN…LQTH, and FPCA…MKTH. The span at 334–343 shows a compositional bias: basic and acidic residues; it reads KTHEGAKEEA. Residues 334–376 are disordered; the sequence is KTHEGAKEEAAAAAQGEGKAGGVVEPPGGKGKREAEGSSASSN. Residues 344-360 show a composition bias toward low complexity; sequence AAAAQGEGKAGGVVEPP.

The protein belongs to the Sp1 C2H2-type zinc-finger protein family. As to expression, ubiquitous. Preferentially expressed by proliferating epithelial cells of teeth, hair follicles and limbs.

The protein localises to the nucleus. Promotes cell proliferation. Plays a role in tooth germ growth. Plays a role in the control of enamel mineralization. Binds the AMBN promoter. The chain is Transcription factor Sp6 (Sp6) from Mus musculus (Mouse).